A 240-amino-acid polypeptide reads, in one-letter code: Mitochondrial inner membrane protease ATP23 (240 aa).

A divalent metal cation is bound at residue His140. The active site involves Glu141. His144 serves as a coordination point for a divalent metal cation.

Belongs to the peptidase M76 family.

It is found in the mitochondrion inner membrane. Its function is as follows. Has a dual role in the assembly of mitochondrial ATPase. Acts as a protease that removes N-terminal residues of mitochondrial ATPase CF(0) subunit 6 at the intermembrane space side. Also involved in the correct assembly of the membrane-embedded ATPase CF(0) particle, probably mediating association of subunit 6 with the subunit 9 ring. The chain is Mitochondrial inner membrane protease ATP23 (ATP23) from Scheffersomyces stipitis (strain ATCC 58785 / CBS 6054 / NBRC 10063 / NRRL Y-11545) (Yeast).